A 566-amino-acid polypeptide reads, in one-letter code: O-fucosyltransferase 36 (566 aa).

Basic and acidic residues predominate over residues 1-14 (MERNSSDDEEDHQH). Positions 1-37 (MERNSSDDEEDHQHLIPQNDTRIRHREDSVSSNATTI) are disordered. Residues 66–86 (YVIVFVSLIISIGLLFLLTDP) traverse the membrane as a helical; Signal-anchor for type II membrane protein segment. N-linked (GlcNAc...) asparagine glycosylation is found at asparagine 93, asparagine 129, asparagine 138, asparagine 179, and asparagine 190. Substrate contacts are provided by residues 415–417 (HFR) and 531–532 (TF).

This sequence belongs to the glycosyltransferase GT106 family.

It localises to the membrane. The protein operates within glycan metabolism. The sequence is that of O-fucosyltransferase 36 from Arabidopsis thaliana (Mouse-ear cress).